A 535-amino-acid polypeptide reads, in one-letter code: MGSNKSKPKDASQRRRSLEPSENVHGAGGAFPASQTPSKPASADGHRGPSAAFVPPAAEPKLFGGFNSSDTVTSPQRAGPLAGGVTTFVALYDYESRTETDLSFKKGERLQIVNNTEGDWWLAHSLSTGQTGYIPSNYVAPSDSIQAEEWYFGKITRRESERLLLNAENPRGTFLVRESETTKGAYCLSVSDFDNAKGLNVKHYKIRKLDSGGFYITSRTQFNSLQQLVAYYSKHADGLCHRLTTVCPTSKPQTQGLAKDAWEIPRESLRLEVKLGQGCFGEVWMGTWNGTTRVAIKTLKPGTMSPEAFLQEAQVMKKLRHEKLVQLYAVVSEEPIYIVTEYMNKGSLLDFLKGETGKYLRLPQLVDMSAQIASGMAYVERMNYVHRDLRAANILVGENLVCKVADFGLARLIEDNEYTARQGAKFPIKWTAPEAALYGRFTIKSDVWSFGILLTELTTKGRVPYPGMVNREVLDQVERGYRMPCPPECPESLHDLMCQCWRKEPEERPTFEYLQAFLEDYFTSTEPQYQPGENL.

The disordered stretch occupies residues 1–56; it reads MGSNKSKPKDASQRRRSLEPSENVHGAGGAFPASQTPSKPASADGHRGPSAAFVPP. Residue Gly2 is the site of N-myristoyl glycine attachment. Positions 7–19 are enriched in basic and acidic residues; it reads KPKDASQRRRSLE. Residues Ser17, Ser21, and Ser74 each carry the phosphoserine modification. Positions 83–144 constitute an SH3 domain; the sequence is GGVTTFVALY…PSNYVAPSDS (62 aa). The SH2 domain occupies 150–247; that stretch reads WYFGKITRRE…GLCHRLTTVC (98 aa). Tyr186 is modified (phosphotyrosine). Residues 269 to 522 form the Protein kinase domain; that stretch reads LRLEVKLGQG…YLQAFLEDYF (254 aa). ATP-binding positions include 275-283 and Lys297; that span reads LGQGCFGEV. Asp388 functions as the Proton acceptor in the catalytic mechanism. A Phosphotyrosine; by autocatalysis modification is found at Tyr418. Tyr418 carries the phosphotyrosine; by FAK2 modification. Position 529 is a phosphotyrosine; by CSK (Tyr529).

It belongs to the protein kinase superfamily. Tyr protein kinase family. SRC subfamily. As to quaternary structure, part of a complex comprised of PTPRA, BCAR1, BCAR3 (via SH2 domain) and SRC; the formation of the complex is dependent on integrin mediated-tyrosine phosphorylation of PTPRA. Interacts with CDCP1, TGFB1I1 and TOM1L2. Interacts with DDEF1/ASAP1 via its SH3 domain. Interacts with CCPG1. Interacts with the cytoplasmic domain of MUC1, phosphorylates it and increases binding of MUC1 with beta-catenin. Interacts with RALGPS1 via its SH3 domain. Interacts with CAV2 (tyrosine phosphorylated form). Interacts (via the SH3 domain and the protein kinase domain) with ARRB1; the interaction is independent of the phosphorylation state of SRC C-terminus. Interacts with FCAMR and PXN. Interacts with ARRB2. Interacts with ARRB1. Interacts with SRCIN1. Interacts with NDFIP2 and more weakly with NDFIP1. Interacts with PIK3CA and/or PIK3C2B, PTK2/FAK1, ESR1 (dimethylated on arginine) and FAK. Interacts (via SH2 and SH3 domain) with TNK2. Interacts (via protein kinase domain) with the tyrosine phosphorylated form of RUNX3 (via runt domain). Interacts with TRAF3 (via RING-type zinc finger domain). Interacts with RIGI, MAVS and TBK1. Interacts (via SH2 domain) with RACK1; the interaction is enhanced by tyrosine phosphorylation of RACK1 and inhibits SRC activity. Interacts (via SH2 domain) with the 'Tyr-402' phosphorylated form of PTK2B/PYK2. Interacts (via SH2 domain) with FLT3 (tyrosine phosphorylated). Identified in a complex containing FGFR4, NCAM1, CDH2, PLCG1, FRS2, SRC, SHC1, GAP43 and CTTN. Interacts with EPHB1; activates the MAPK/ERK cascade to regulate cell migration. Interacts with ERBB2 and STAT1. Interacts with PDGFRA (tyrosine phosphorylated). Interacts with CSF1R. Interacts (via SH2 domain) with the 'Tyr-9' phosphorylated form of PDPK1. Interacts with DDR2. Interacts with AMOTL2; this interaction regulates the translocation of phosphorylated SRC to peripheral cell-matrix adhesion sites. Interacts with DDR1 and DAB2. Interacts with TRAP1. Interacts with CBLC; the interaction is enhanced when SRC is phosphorylated at 'Tyr-424'. Interacts with ARHGEF5. Interacts (via cytoplasmic domain) with CEACAM1 (via SH2 domain); this interaction is regulated by trans-homophilic cell adhesion. Interacts with MPP2. Interacts with PRR7. Interacts (via kinase domain and to a lesser extent the SH2 domain) directly with PDLIM4; this interaction results in PTPN13-mediated dephosphorylation of this protein leading to its inactivation. Interacts with P85 (PIK3R1 or PIK3R2). Interacts with HNRNPA2B1. Interacts with IL6ST/gp130. Interacts (via SH3 domain) with PELP1 in the presence of 17-beta-estradiol. Interacts with AMBRA1. In terms of processing, myristoylated at Gly-2, and this is essential for targeting to membranes. Post-translationally, dephosphorylated at Tyr-529 by PTPRJ. Phosphorylated on Tyr-529 by c-Src kinase (CSK). The phosphorylated form is termed pp60c-src. Dephosphorylated by PTPRJ at Tyr-418. Normally maintained in an inactive conformation with the SH2 domain engaged with Tyr-529, the SH3 domain engaged with the SH2-kinase linker, and Tyr-418 dephosphorylated. Dephosphorylation of Tyr-529 as a result of protein tyrosine phosphatase (PTP) action disrupts the intramolecular interaction between the SH2 domain and Tyr-529, Tyr-418 can then become autophosphorylated, resulting in SRC activation. Phosphorylation of Tyr-529 by CSK allows this interaction to reform, resulting in SRC inactivation. CDK5-mediated phosphorylation at Ser-74 targets SRC to ubiquitin-dependent degradation and thus leads to cytoskeletal reorganization. Phosphorylated by PTK2/FAK1; this enhances kinase activity. Phosphorylated by PTK2B/PYK2; this enhances kinase activity. Upon activation of IL6ST by IL6, Tyr-418 is phosphorylated and Tyr-529 dephosphorylated. Displays reduced levels of autophosphorylation at Tyr-418 compared to isoform 2. In terms of processing, displays enhanced levels of autophosphorylation at Tyr-418 compared to isoform 1. Post-translationally, S-nitrosylation is important for activation of its kinase activity. Ubiquitinated in response to CDK5-mediated phosphorylation. Ubiquitination mediated by CBLC requires SRC autophosphorylation at Tyr-418 and may lead to lysosomal degradation.

It localises to the cell membrane. The protein localises to the mitochondrion inner membrane. The protein resides in the nucleus. It is found in the cytoplasm. Its subcellular location is the cytoskeleton. It localises to the perinuclear region. The protein localises to the cell junction. The protein resides in the focal adhesion. It catalyses the reaction L-tyrosyl-[protein] + ATP = O-phospho-L-tyrosyl-[protein] + ADP + H(+). With respect to regulation, phosphorylation by CSK at Tyr-529 inhibits kinase activity. Inhibitory phosphorylation at Tyr-529 is enhanced by heme. Further phosphorylation by CDK1 partially reactivates CSK-inactivated SRC and facilitates complete reactivation by protein tyrosine phosphatase PTPRC. Integrin engagement stimulates kinase activity. Phosphorylation by PTK2/FAK1 enhances kinase activity. Butein and pseudosubstrate-based peptide inhibitors like CIYKYYF act as inhibitors. Phosphorylation at Tyr-418 increases kinase activity. Functionally, non-receptor protein tyrosine kinase which is activated following engagement of many different classes of cellular receptors including immune response receptors, integrins and other adhesion receptors, receptor protein tyrosine kinases, G protein-coupled receptors as well as cytokine receptors. Participates in signaling pathways that control a diverse spectrum of biological activities including gene transcription, immune response, cell adhesion, cell cycle progression, apoptosis, migration, and transformation. Due to functional redundancy between members of the SRC kinase family, identification of the specific role of each SRC kinase is very difficult. SRC appears to be one of the primary kinases activated following engagement of receptors and plays a role in the activation of other protein tyrosine kinase (PTK) families. Receptor clustering or dimerization leads to recruitment of SRC to the receptor complexes where it phosphorylates the tyrosine residues within the receptor cytoplasmic domains. Plays an important role in the regulation of cytoskeletal organization through phosphorylation of specific substrates such as AFAP1. Phosphorylation of AFAP1 allows the SRC SH2 domain to bind AFAP1 and to localize to actin filaments. Cytoskeletal reorganization is also controlled through the phosphorylation of cortactin (CTTN). When cells adhere via focal adhesions to the extracellular matrix, signals are transmitted by integrins into the cell resulting in tyrosine phosphorylation of a number of focal adhesion proteins, including PTK2/FAK1 and paxillin (PXN). In addition to phosphorylating focal adhesion proteins, SRC is also active at the sites of cell-cell contact adherens junctions and phosphorylates substrates such as beta-catenin (CTNNB1), delta-catenin (CTNND1), and plakoglobin (JUP). Another type of cell-cell junction, the gap junction, is also a target for SRC, which phosphorylates connexin-43 (GJA1). SRC is implicated in regulation of pre-mRNA-processing and phosphorylates RNA-binding proteins such as KHDRBS1. Phosphorylates PKP3 at 'Tyr-195' in response to reactive oxygen species, which may cause the release of PKP3 from desmosome cell junctions into the cytoplasm. Also plays a role in PDGF-mediated tyrosine phosphorylation of both STAT1 and STAT3, leading to increased DNA binding activity of these transcription factors. Involved in the RAS pathway through phosphorylation of RASA1 and RASGRF1. Plays a role in EGF-mediated calcium-activated chloride channel activation. Required for epidermal growth factor receptor (EGFR) internalization through phosphorylation of clathrin heavy chain (CLTC and CLTCL1) at 'Tyr-1477'. Involved in beta-arrestin (ARRB1 and ARRB2) desensitization through phosphorylation and activation of GRK2, leading to beta-arrestin phosphorylation and internalization. Has a critical role in the stimulation of the CDK20/MAPK3 mitogen-activated protein kinase cascade by epidermal growth factor. Might be involved not only in mediating the transduction of mitogenic signals at the level of the plasma membrane but also in controlling progression through the cell cycle via interaction with regulatory proteins in the nucleus. Plays an important role in osteoclastic bone resorption in conjunction with PTK2B/PYK2. Both the formation of a SRC-PTK2B/PYK2 complex and SRC kinase activity are necessary for this function. Recruited to activated integrins by PTK2B/PYK2, thereby phosphorylating CBL, which in turn induces the activation and recruitment of phosphatidylinositol 3-kinase to the cell membrane in a signaling pathway that is critical for osteoclast function. Promotes energy production in osteoclasts by activating mitochondrial cytochrome C oxidase. Phosphorylates DDR2 on tyrosine residues, thereby promoting its subsequent autophosphorylation. Phosphorylates RUNX3 and COX2 on tyrosine residues, TNK2 on 'Tyr-284' and CBL on 'Tyr-738'. Enhances RIGI-elicited antiviral signaling. Phosphorylates PDPK1 at 'Tyr-9', 'Tyr-373' and 'Tyr-376'. Phosphorylates BCAR1 at 'Tyr-226'. Phosphorylates CBLC at multiple tyrosine residues, phosphorylation at 'Tyr-341' activates CBLC E3 activity. Phosphorylates synaptic vesicle protein synaptophysin (SYP). Involved in anchorage-independent cell growth. Required for podosome formation. Mediates IL6 signaling by activating YAP1-NOTCH pathway to induce inflammation-induced epithelial regeneration. Phosphorylates OTUB1, promoting deubiquitination of RPTOR. In terms of biological role, non-receptor protein tyrosine kinase which phosphorylates synaptophysin with high affinity. Its function is as follows. Non-receptor protein tyrosine kinase which shows higher basal kinase activity than isoform 1, possibly due to weakened intramolecular interactions which enhance autophosphorylation of Tyr-418 and subsequent activation. The SH3 domain shows reduced affinity with the linker sequence between the SH2 and kinase domains which may account for the increased basal activity. Displays altered substrate specificity compared to isoform 1, showing weak affinity for synaptophysin and for peptide substrates containing class I or class II SH3 domain-binding motifs. Plays a role in L1CAM-mediated neurite elongation, possibly by acting downstream of L1CAM to drive cytoskeletal rearrangements involved in neurite outgrowth. The sequence is that of Proto-oncogene tyrosine-protein kinase Src from Mus musculus (Mouse).